A 56-amino-acid chain; its full sequence is uncharacterized protein (56 aa).

A helical membrane pass occupies residues 33–53 (INIIYLAIMKIIMNIIMMIMI).

Its subcellular location is the host membrane. This is an uncharacterized protein from Bos taurus (Bovine).